A 292-amino-acid chain; its full sequence is MNKDIATPIRTKEILKKYGFSFKKSLGQNFLIDTNILNRIVDHAEVTEKTGVIEIGPGIGALTEQLAKRAKKVVAFEIDQRLLPILKDTLSPYENVTVIHQDVLKADVKSVIEEQFQDCDEIMVVANLPYYVTTPIIMKLLEEHLPLKGIVVMLQKEVAERMAADPSSKEYGSLSIAVQFYTEAKTVMIVPKTVFVPQPNVDSAVIRLILRDGPAVDVENESFFFQLIKASFAQRRKTLLNNLVNNLPEGKAQKSTIEQVLEETNIDGKRRGESLSIEEFAALSNGLYKALF.

Asparagine 29, leucine 31, glycine 56, glutamate 77, aspartate 102, and asparagine 127 together coordinate S-adenosyl-L-methionine.

The protein belongs to the class I-like SAM-binding methyltransferase superfamily. rRNA adenine N(6)-methyltransferase family. RsmA subfamily.

The protein localises to the cytoplasm. It carries out the reaction adenosine(1518)/adenosine(1519) in 16S rRNA + 4 S-adenosyl-L-methionine = N(6)-dimethyladenosine(1518)/N(6)-dimethyladenosine(1519) in 16S rRNA + 4 S-adenosyl-L-homocysteine + 4 H(+). Specifically dimethylates two adjacent adenosines (A1518 and A1519) in the loop of a conserved hairpin near the 3'-end of 16S rRNA in the 30S particle. May play a critical role in biogenesis of 30S subunits. This Bacillus subtilis (strain 168) protein is Ribosomal RNA small subunit methyltransferase A.